The following is a 146-amino-acid chain: Hemoglobin subunit beta (146 aa).

Val-1 carries the post-translational modification N-acetylvaline. Residues 2-146 (HLTADEKAAV…VATALAHKYH (145 aa)) enclose the Globin domain. At Ser-44 the chain carries Phosphoserine. An N6-acetyllysine modification is found at Lys-59. Heme b is bound at residue His-63. Lys-82 carries the N6-acetyllysine modification. Heme b is bound at residue His-92. At Cys-93 the chain carries S-nitrosocysteine. Position 144 is an N6-acetyllysine (Lys-144).

It belongs to the globin family. As to quaternary structure, heterotetramer of two alpha chains and two beta chains. Red blood cells.

Its function is as follows. Involved in oxygen transport from the lung to the various peripheral tissues. The polypeptide is Hemoglobin subunit beta (HBB) (Myotis velifer (Mouse-eared bat)).